Here is a 290-residue protein sequence, read N- to C-terminus: PIH1 domain-containing protein 1 (290 aa).

Phosphoserine occurs at positions 12, 16, and 173.

The protein belongs to the PIH1 family. Component of the R2TP complex composed at least of RUVBL1, RUVBL2, RPAP3 and PIHD1. Component of the PAQosome complex which is responsible for the biogenesis of several protein complexes and which consists of R2TP complex members RUVBL1, RUVBL2, RPAP3 and PIH1D1, URI complex members PFDN2, PFDN6, PDRG1, UXT and URI1 as well as ASDURF, POLR2E and DNAAF10/WDR92. Interacts with phosphorylated TELO2. Mediates interaction of TELO2 with the R2TP complex. Interacts with phosphorylated ECD, EFTUD2/SNRP116, RPB1 and UBR5 and with RPB1 in a phosphorylation-independent manner. Interacts with the core C/D box snoRNP particle components NOP58 and FBL and with RUVBL1/TIP49. Interacts with RPAP3 and DNAAF10. Interacts with histone H4 and with SWI/SNF complex member SMARCB1/SNF5. Interacts with the mTORC1 complex member RPTOR. Interacts with isoform 1 of MSL1.

Its subcellular location is the nucleus. Involved in the assembly of C/D box small nucleolar ribonucleoprotein (snoRNP) particles. Recruits the SWI/SNF complex to the core promoter of rRNA genes and enhances pre-rRNA transcription. Mediates interaction of TELO2 with the R2TP complex which is necessary for the stability of MTOR and SMG1. Positively regulates the assembly and activity of the mTORC1 complex. This is PIH1 domain-containing protein 1 (Pih1d1) from Mus musculus (Mouse).